The primary structure comprises 224 residues: UPF0758 protein Maqu_3564 (224 aa).

The 123-residue stretch at 102-224 (PLRSPADTRR…VISLAERGLM (123 aa)) folds into the MPN domain. Zn(2+)-binding residues include His-173, His-175, and Asp-186. The JAMM motif signature appears at 173 to 186 (HNHPSGVAEPSQAD).

This sequence belongs to the UPF0758 family.

This chain is UPF0758 protein Maqu_3564, found in Marinobacter nauticus (strain ATCC 700491 / DSM 11845 / VT8) (Marinobacter aquaeolei).